The following is a 280-amino-acid chain: ESX-1 secretion-associated protein EspJ (280 aa).

Ser-70 carries the post-translational modification Phosphoserine. Composition is skewed to low complexity over residues Gln-167 to Gln-181 and Pro-246 to Leu-280. Positions Gln-167–Leu-280 are disordered.

In terms of assembly, residues 76-280 interact with EsxB and an artificial EsxB-EsxA heterodimer. Phosphorylated at Ser-70.

The protein localises to the secreted. Could be involved in regulation of growth and intracellular survival. The sequence is that of ESX-1 secretion-associated protein EspJ from Mycobacterium tuberculosis (strain ATCC 25618 / H37Rv).